A 256-amino-acid chain; its full sequence is Proteasome subunit alpha (256 aa).

The interval 235 to 256 (ELDSNGSDGNGDAPELNGGSSD) is disordered.

This sequence belongs to the peptidase T1A family. In terms of assembly, the 20S proteasome core is composed of 14 alpha and 14 beta subunits that assemble into four stacked heptameric rings, resulting in a barrel-shaped structure. The two inner rings, each composed of seven catalytic beta subunits, are sandwiched by two outer rings, each composed of seven alpha subunits. The catalytic chamber with the active sites is on the inside of the barrel. Has a gated structure, the ends of the cylinder being occluded by the N-termini of the alpha-subunits. Is capped by the proteasome-associated ATPase, ARC.

Its subcellular location is the cytoplasm. The protein operates within protein degradation; proteasomal Pup-dependent pathway. Its activity is regulated as follows. The formation of the proteasomal ATPase ARC-20S proteasome complex, likely via the docking of the C-termini of ARC into the intersubunit pockets in the alpha-rings, may trigger opening of the gate for substrate entry. Interconversion between the open-gate and close-gate conformations leads to a dynamic regulation of the 20S proteasome proteolysis activity. In terms of biological role, component of the proteasome core, a large protease complex with broad specificity involved in protein degradation. The sequence is that of Proteasome subunit alpha from Mycolicibacterium paratuberculosis (strain ATCC BAA-968 / K-10) (Mycobacterium paratuberculosis).